The sequence spans 284 residues: tRNA N(3)-cytidine methyltransferase METTL6 (284 aa).

Residues Trp45 and Tyr49 each contribute to the S-adenosyl-L-methionine site. S-adenosyl-L-homocysteine-binding residues include Tyr49, His61, Glu85, Gly87, Asp110, Asp136, Leu137, and Ile157. Residues Gly87, Asp110, Asp136, Leu137, and Ile157 each contribute to the S-adenosyl-L-methionine site.

It belongs to the methyltransferase superfamily. METL family. In terms of assembly, monomer. Interacts with SARS1/SerRS; interaction is mediated via tRNA(Ser) and is required for N(3)-methylcytidine methylation.

It localises to the cytoplasm. The protein resides in the nucleus. The enzyme catalyses cytidine(32) in tRNA(Ser) + S-adenosyl-L-methionine = N(3)-methylcytidine(32) in tRNA(Ser) + S-adenosyl-L-homocysteine + H(+). In terms of biological role, S-adenosyl-L-methionine-dependent methyltransferase that mediates N(3)-methylcytidine modification of residue 32 of the tRNA anticodon loop of tRNA(Ser), including tRNA(Ser)(UGA) and tRNA(Ser)(GCU). Interaction with SARS1/SerRS is required for N(3)-methylcytidine methylation. This Homo sapiens (Human) protein is tRNA N(3)-cytidine methyltransferase METTL6.